A 343-amino-acid chain; its full sequence is tRNA N6-adenosine threonylcarbamoyltransferase (343 aa).

Fe cation contacts are provided by His120 and His124. Substrate contacts are provided by residues 142–146 (VVSGG), Asp175, Gly188, Asp192, and Asn281. Residue Asp310 coordinates Fe cation.

The protein belongs to the KAE1 / TsaD family. Fe(2+) is required as a cofactor.

The protein resides in the cytoplasm. It carries out the reaction L-threonylcarbamoyladenylate + adenosine(37) in tRNA = N(6)-L-threonylcarbamoyladenosine(37) in tRNA + AMP + H(+). In terms of biological role, required for the formation of a threonylcarbamoyl group on adenosine at position 37 (t(6)A37) in tRNAs that read codons beginning with adenine. Is involved in the transfer of the threonylcarbamoyl moiety of threonylcarbamoyl-AMP (TC-AMP) to the N6 group of A37, together with TsaE and TsaB. TsaD likely plays a direct catalytic role in this reaction. The sequence is that of tRNA N6-adenosine threonylcarbamoyltransferase from Bacillus cereus (strain ATCC 10987 / NRS 248).